A 417-amino-acid polypeptide reads, in one-letter code: Mast cell carboxypeptidase A (417 aa).

The N-terminal stretch at 1 to 15 is a signal peptide; the sequence is MRLILPVGLIATTLA. The propeptide at 16–109 is activation peptide; it reads IAPVRFDREK…IEKQFDVKED (94 aa). One can recognise a Peptidase M14 domain in the interval 118–412; that stretch reads KYNNWEKIVA…LAVKFIAKYI (295 aa). Disulfide bonds link Cys-173/Cys-186 and Cys-245/Cys-268. The Zn(2+) site is built by His-176 and Glu-179. Position 304 (His-304) interacts with Zn(2+). Glu-378 (proton donor/acceptor) is an active-site residue.

This sequence belongs to the peptidase M14 family. Zn(2+) serves as cofactor.

The protein resides in the cytoplasmic vesicle. The protein localises to the secretory vesicle. It carries out the reaction Release of a C-terminal amino acid, but little or no action with -Asp, -Glu, -Arg, -Lys or -Pro.. The protein is Mast cell carboxypeptidase A (CPA3) of Homo sapiens (Human).